The sequence spans 159 residues: Sumo-conjugating enzyme ubc9 (159 aa).

Positions 4–157 constitute a UBC core domain; it reads ISSARLSEER…VKAQSKVYPP (154 aa). The active-site Glycyl thioester intermediate is the cysteine 93.

It belongs to the ubiquitin-conjugating enzyme family.

The protein localises to the nucleus. The protein operates within protein modification; protein sumoylation. Its function is as follows. Accepts the ubiquitin-like protein sumo from the E1 complex and catalyzes its covalent attachment to other proteins with the help of an E3 ligase. This Dictyostelium discoideum (Social amoeba) protein is Sumo-conjugating enzyme ubc9 (ubc9).